We begin with the raw amino-acid sequence, 58 residues long: ATP synthase F(0) complex subunit k, mitochondrial (58 aa).

N6-acetyllysine is present on residues K16 and K17. A helical transmembrane segment spans residues T23–F45.

Component of the ATP synthase complex composed at least of ATP5F1A/subunit alpha, ATP5F1B/subunit beta, ATP5MC1/subunit c (homooctomer), MT-ATP6/subunit a, MT-ATP8/subunit 8, ATP5ME/subunit e, ATP5MF/subunit f, ATP5MG/subunit g, ATP5MK/subunit k, ATP5MJ/subunit j, ATP5F1C/subunit gamma, ATP5F1D/subunit delta, ATP5F1E/subunit epsilon, ATP5PF/subunit F6, ATP5PB/subunit b, ATP5PD/subunit d, ATP5PO/subunit OSCP. ATP synthase complex consists of a soluble F(1) head domain (subunits alpha(3) and beta(3)) - the catalytic core - and a membrane F(0) domain - the membrane proton channel (subunits c, a, 8, e, f, g, k and j). These two domains are linked by a central stalk (subunits gamma, delta, and epsilon) rotating inside the F1 region and a stationary peripheral stalk (subunits F6, b, d, and OSCP). The ATP synthase complex/complex V exists as a monomeric and a dimeric supercomplex that helps shape mitochondrial cristae to optimize proton flow. Ubiquitous. Highly expressed in skeletal and cardiac muscle. Moderately expressed in brain, thymus, stomach and testis. Lowest expression levels were detected in lung, liver, kidney, adrenal gland, spleen, small intestine and adipose tissue. In streptozotocin-induced diabetes, the insulin-sensitive tissues skeletal and cardiac muscle were down-regulated.

The protein resides in the mitochondrion membrane. Functionally, subunit k, of the mitochondrial membrane ATP synthase complex (F(1)F(0) ATP synthase or Complex V) that produces ATP from ADP in the presence of a proton gradient across the membrane which is generated by electron transport complexes of the respiratory chain. ATP synthase complex consist of a soluble F(1) head domain - the catalytic core - and a membrane F(1) domain - the membrane proton channel. These two domains are linked by a central stalk rotating inside the F(1) region and a stationary peripheral stalk. During catalysis, ATP synthesis in the catalytic domain of F(1) is coupled via a rotary mechanism of the central stalk subunits to proton translocation. In vivo, can only synthesize ATP although its ATP hydrolase activity can be activated artificially in vitro. Part of the complex F(0) domain. Required for dimerization of the ATP synthase complex and as such regulates ATP synthesis in the mitochondria. This chain is ATP synthase F(0) complex subunit k, mitochondrial (Atp5mk), found in Rattus norvegicus (Rat).